The sequence spans 153 residues: Putative ATP synthase subunit f, mitochondrial (153 aa).

It belongs to the ATPase F chain family. In terms of assembly, subunit of the F-type ATPase which has 2 components, CF(1) - the catalytic core - and CF(0) - the membrane proton channel.

The protein localises to the mitochondrion membrane. In terms of biological role, mitochondrial membrane ATP synthase (F(1)F(0) ATP synthase or Complex V) produces ATP from ADP in the presence of a proton gradient across the membrane which is generated by electron transport complexes of the respiratory chain. F-type ATPases consist of two structural domains, F(1) - containing the extramembraneous catalytic core and F(0) - containing the membrane proton channel, linked together by a central stalk and a peripheral stalk. During catalysis, ATP synthesis in the catalytic domain of F(1) is coupled via a rotary mechanism of the central stalk subunits to proton translocation. Part of the complex F(0) domain. Minor subunit located with subunit a in the membrane. In Caenorhabditis elegans, this protein is Putative ATP synthase subunit f, mitochondrial.